The following is a 262-amino-acid chain: tRNA pseudouridine synthase A (262 aa).

Asp-51 (nucleophile) is an active-site residue. Tyr-106 serves as a coordination point for substrate.

It belongs to the tRNA pseudouridine synthase TruA family.

It catalyses the reaction uridine(38/39/40) in tRNA = pseudouridine(38/39/40) in tRNA. Formation of pseudouridine at positions 38, 39 and 40 in the anticodon stem and loop of transfer RNAs. In Pyrococcus horikoshii (strain ATCC 700860 / DSM 12428 / JCM 9974 / NBRC 100139 / OT-3), this protein is tRNA pseudouridine synthase A.